The following is a 903-amino-acid chain: Valine--tRNA ligase (903 aa).

Positions 1–15 are enriched in polar residues; that stretch reads MVCVTDQNNETTSQN. The segment at 1-21 is disordered; that stretch reads MVCVTDQNNETTSQNRADKLP. Positions 61-71 match the 'HIGH' region motif; that stretch reads PNVTGQLHMGH. The short motif at 552-556 is the 'KMSKS' region element; that stretch reads KMSKS. Lys-555 contacts ATP. A coiled-coil region spans residues 836-903; the sequence is TVDVAAERKR…RINKRLEELA (68 aa).

This sequence belongs to the class-I aminoacyl-tRNA synthetase family. ValS type 1 subfamily. Monomer.

It localises to the cytoplasm. It catalyses the reaction tRNA(Val) + L-valine + ATP = L-valyl-tRNA(Val) + AMP + diphosphate. Its function is as follows. Catalyzes the attachment of valine to tRNA(Val). As ValRS can inadvertently accommodate and process structurally similar amino acids such as threonine, to avoid such errors, it has a 'posttransfer' editing activity that hydrolyzes mischarged Thr-tRNA(Val) in a tRNA-dependent manner. The chain is Valine--tRNA ligase from Corynebacterium glutamicum (strain ATCC 13032 / DSM 20300 / JCM 1318 / BCRC 11384 / CCUG 27702 / LMG 3730 / NBRC 12168 / NCIMB 10025 / NRRL B-2784 / 534).